The following is a 296-amino-acid chain: MTDTPFHCGFVAIVGRPNVGKSTLMNHLIGQKISITSKKSQTTRHRVTGIHTEDAAQFVFVDTPGFQTYHKGALNEALNKSVKDSLGSVDCVLFLLEAMRFTAADREVMALLPKKTPVILVVNKLDKAKDKLTLQAFIDEVTAEFEFAGVEVVSAKHGQRLAELLDQVRPHLPESMPLYPEDMITDKNERFLAAEIVREKLFRYLGEELPYEMNVEVEMFEMDGALRRIHIAVLVDKEHQKPIVIGRGGEKLKKISTEARLDMEKLFDGKVFLQVWVKVKSGWADDVRFLREFGLD.

Residues 7-174 (HCGFVAIVGR…LDQVRPHLPE (168 aa)) enclose the Era-type G domain. The interval 15-22 (GRPNVGKS) is G1. GTP is bound at residue 15-22 (GRPNVGKS). The interval 41–45 (QTTRH) is G2. The tract at residues 62–65 (DTPG) is G3. GTP contacts are provided by residues 62 to 66 (DTPGF) and 123 to 126 (NKLD). Residues 123-126 (NKLD) form a G4 region. The interval 153–155 (VSA) is G5. The KH type-2 domain occupies 205–281 (LGEELPYEMN…FLQVWVKVKS (77 aa)).

It belongs to the TRAFAC class TrmE-Era-EngA-EngB-Septin-like GTPase superfamily. Era GTPase family. As to quaternary structure, monomer.

The protein resides in the cytoplasm. It localises to the cell inner membrane. In terms of biological role, an essential GTPase that binds both GDP and GTP, with rapid nucleotide exchange. Plays a role in 16S rRNA processing and 30S ribosomal subunit biogenesis and possibly also in cell cycle regulation and energy metabolism. This Chromobacterium violaceum (strain ATCC 12472 / DSM 30191 / JCM 1249 / CCUG 213 / NBRC 12614 / NCIMB 9131 / NCTC 9757 / MK) protein is GTPase Era.